Consider the following 514-residue polypeptide: Multifunctional alkaline phosphatase superfamily protein PehA (514 aa).

4 residues coordinate Mn(2+): Asp-12, Cys-57, Asp-324, and His-325. Residue Cys-57 is the Nucleophile of the active site. At Cys-57 the chain carries 3-oxoalanine (Cys).

It belongs to the alkaline phosphatase superfamily. As to quaternary structure, homotetramer. It depends on Mn(2+) as a cofactor. In terms of processing, the conversion to 3-oxoalanine (also known as C-formylglycine, FGly), of a serine or cysteine residue in prokaryotes and of a cysteine residue in eukaryotes, is critical for catalytic activity. Phosphate triester hydrolytic activity is retained with unmodified cysteine acting as a nucleophile.

Anions including Cl(-) and CH3COO(-), and SO4(2-) salts stimulate activity 20-40% at 100 mM. In terms of biological role, hydrolytic enzyme with a broad substrate specificity acting on phosphate diesters and phosphonate monoesters. Hydrolyzes phosphate mono- and triesters, sulfate monoesters and sulfonate monoesters. Hydrolyzes glyphosate monoesters. Does not hydrolyze DNA or cGMP. Hydrolyzes glyceryl glyphosate, but this substrate has a much lower affinity than the glyphosate monoesters. The chain is Multifunctional alkaline phosphatase superfamily protein PehA from Trinickia caryophylli (Paraburkholderia caryophylli).